The following is a 501-amino-acid chain: Cytochrome P450 90A4 (501 aa).

Residues 2-22 traverse the membrane as a helical segment; that stretch reads AAAALLLLAAAAAAVVVAMAL. Cys-446 provides a ligand contact to heme.

This sequence belongs to the cytochrome P450 family. Heme serves as cofactor. As to expression, highly expressed in shoot apex and inflorenscence. Expressed in roots, stems, leaf blades and leaf sheaths.

The protein resides in the cell membrane. Its pathway is plant hormone biosynthesis; brassinosteroid biosynthesis. Catalyzes the C23-alpha-hydroxylation step in brassinosteroid biosynthesis. Converts 6-deoxocathasterone to 6-deoxoteasterone in the late C6-oxidation pathway and cathasterone to teasterone (TE) in the early C6-oxidation pathway of brassinolide (BL) biosynthesis. In Oryza sativa subsp. japonica (Rice), this protein is Cytochrome P450 90A4.